Here is a 479-residue protein sequence, read N- to C-terminus: Ribulose bisphosphate carboxylase large chain (479 aa).

A propeptide spanning residues 1–2 (MS) is cleaved from the precursor. Asn123 and Thr173 together coordinate substrate. Lys175 (proton acceptor) is an active-site residue. Lys177 serves as a coordination point for substrate. Mg(2+)-binding residues include Lys201, Asp203, and Glu204. Lys201 carries the N6-carboxylysine modification. Ser208 is subject to Phosphoserine. Residue His294 is the Proton acceptor of the active site. Residues Arg295 and His327 each contribute to the substrate site. At Thr330 the chain carries Phosphothreonine. Residue Ser379 coordinates substrate.

The protein belongs to the RuBisCO large chain family. Type I subfamily. Heterohexadecamer of 8 large chains and 8 small chains; disulfide-linked. The disulfide link is formed within the large subunit homodimers. Mg(2+) is required as a cofactor. In terms of processing, the disulfide bond which can form in the large chain dimeric partners within the hexadecamer appears to be associated with oxidative stress and protein turnover.

It is found in the plastid. It localises to the chloroplast. It carries out the reaction 2 (2R)-3-phosphoglycerate + 2 H(+) = D-ribulose 1,5-bisphosphate + CO2 + H2O. The catalysed reaction is D-ribulose 1,5-bisphosphate + O2 = 2-phosphoglycolate + (2R)-3-phosphoglycerate + 2 H(+). Functionally, ruBisCO catalyzes two reactions: the carboxylation of D-ribulose 1,5-bisphosphate, the primary event in carbon dioxide fixation, as well as the oxidative fragmentation of the pentose substrate in the photorespiration process. Both reactions occur simultaneously and in competition at the same active site. The polypeptide is Ribulose bisphosphate carboxylase large chain (Crucihimalaya wallichii (Rock-cress)).